The sequence spans 407 residues: Putative D-cysteine desulfhydrase 2, mitochondrial (407 aa).

The transit peptide at Met1–Thr34 directs the protein to the mitochondrion. Residues Pro39 to Pro72 form a disordered region. Lys90 carries the N6-(pyridoxal phosphate)lysine modification.

It belongs to the ACC deaminase/D-cysteine desulfhydrase family. Pyridoxal 5'-phosphate serves as cofactor.

The protein resides in the mitochondrion. The enzyme catalyses D-cysteine + H2O = hydrogen sulfide + pyruvate + NH4(+) + H(+). Functionally, catalyzes the production of hydrogen sulfide (H2S) from cysteine. This is Putative D-cysteine desulfhydrase 2, mitochondrial from Oryza sativa subsp. japonica (Rice).